The primary structure comprises 264 residues: Thiazole synthase (264 aa).

The active-site Schiff-base intermediate with DXP is the K106. Residues G167, 193–194 (AG), and 215–216 (NS) contribute to the 1-deoxy-D-xylulose 5-phosphate site.

Belongs to the ThiG family. In terms of assembly, homotetramer. Forms heterodimers with either ThiH or ThiS.

It is found in the cytoplasm. It carries out the reaction [ThiS sulfur-carrier protein]-C-terminal-Gly-aminoethanethioate + 2-iminoacetate + 1-deoxy-D-xylulose 5-phosphate = [ThiS sulfur-carrier protein]-C-terminal Gly-Gly + 2-[(2R,5Z)-2-carboxy-4-methylthiazol-5(2H)-ylidene]ethyl phosphate + 2 H2O + H(+). The protein operates within cofactor biosynthesis; thiamine diphosphate biosynthesis. Its function is as follows. Catalyzes the rearrangement of 1-deoxy-D-xylulose 5-phosphate (DXP) to produce the thiazole phosphate moiety of thiamine. Sulfur is provided by the thiocarboxylate moiety of the carrier protein ThiS. In vitro, sulfur can be provided by H(2)S. The chain is Thiazole synthase from Pseudomonas savastanoi pv. phaseolicola (strain 1448A / Race 6) (Pseudomonas syringae pv. phaseolicola (strain 1448A / Race 6)).